Consider the following 475-residue polypeptide: Mitochondrial adenyl nucleotide antiporter SLC25A24 (475 aa).

A regulatory N-terminal domain region spans residues 1-173 (MLRWLRAFVL…RFWKHSTGID (173 aa)). Residues 1–197 (MLRWLRAFVL…EKKSGQWWRQ (197 aa)) lie on the Mitochondrial intermembrane side of the membrane. EF-hand domains are found at residues 19 to 54 (EPPT…LGIP), 55 to 88 (LGQD…KDHE), 86 to 121 (DHEK…LGLH), and 122 to 157 (ISEK…NPVT). Ca(2+) contacts are provided by Asp-32, Asn-34, Asp-36, Val-38, Glu-43, Asp-68, Asn-70, Asp-72, Lys-74, Glu-79, Asp-99, Asn-101, Asp-103, Lys-105, Glu-110, Asp-135, Asp-137, Thr-139, Thr-141, and Glu-146. The linker region stretch occupies residues 159-168 (IEEIIRFWKH). The C-terminal transmembrane transporter domain stretch occupies residues 174 to 475 (IGDSLTIPDE…MKQTLGVAQK (302 aa)). Solcar repeat units follow at residues 192–276 (GQWW…YKKL), 284–369 (LGTF…LKSY), and 381–469 (PGVM…MKQT). A helical transmembrane segment spans residues 198–215 (LLAGGVAGAVSRTSTAPL). Residues 216–250 (DRLKVMMQVHGSKSMNIFGGFRQMVKEGGIRSLWR) lie on the Mitochondrial matrix side of the membrane. A helical transmembrane segment spans residues 251 to 270 (GNGTNVIKIAPETAVKFWAY). Residues 271 to 293 (EQYKKLLTEEGQKLGTFERFISG) lie on the Mitochondrial intermembrane side of the membrane. Residues 294–307 (SMAGATAQTFIYPM) traverse the membrane as a helical segment. Residues 308-343 (EVLKTRLAVAKTGQYSGIYGCAKKILKHEGFGAFYK) are Mitochondrial matrix-facing. An N6-acetyllysine; alternate modification is found at Lys-318. Position 318 is an N6-succinyllysine; alternate (Lys-318). Lys-334 carries the N6-acetyllysine modification. A helical transmembrane segment spans residues 344–363 (GYIPNLLGIIPYAGIDLAVY). The Mitochondrial intermembrane segment spans residues 364–386 (ELLKSYWLDNFAKDSVNPGVMVL). Residues 387 to 404 (LSCGALSSTCGQLASYPL) form a helical membrane-spanning segment. Residues 405–443 (ALVRTRMQAQATVEGAPQLSMVGLFQRIVSKEGVSGLYR) are Mitochondrial matrix-facing. N6-acetyllysine; alternate is present on Lys-435. The residue at position 435 (Lys-435) is an N6-succinyllysine; alternate. The chain crosses the membrane as a helical span at residues 444–463 (GITPNFMKVLPAVGISYVVY). The Mitochondrial intermembrane segment spans residues 464 to 475 (ENMKQTLGVAQK).

It belongs to the mitochondrial carrier (TC 2.A.29) family. As to quaternary structure, monomer.

Its subcellular location is the mitochondrion inner membrane. The catalysed reaction is Mg(2+)(out) + phosphate(in) + ATP(out) = Mg(2+)(in) + phosphate(out) + ATP(in). The enzyme catalyses ADP(out) + phosphate(in) + H(+)(out) = ADP(in) + phosphate(out) + H(+)(in). It catalyses the reaction AMP(out) + phosphate(in) = AMP(in) + phosphate(out). It carries out the reaction phosphate(in) + ATP(out) + 2 H(+)(out) = phosphate(out) + ATP(in) + 2 H(+)(in). The catalysed reaction is dADP(in) + ADP(out) = dADP(out) + ADP(in). The enzyme catalyses Mg(2+)(in) + ADP(out) + ATP(in) + H(+)(out) = Mg(2+)(out) + ADP(in) + ATP(out) + H(+)(in). It catalyses the reaction ADP(out) + diphosphate(in) = ADP(in) + diphosphate(out). It carries out the reaction dAMP(in) + ADP(out) + H(+)(out) = dAMP(out) + ADP(in) + H(+)(in). The catalysed reaction is 3'-AMP(in) + ADP(out) + H(+)(out) = 3'-AMP(out) + ADP(in) + H(+)(in). The enzyme catalyses dAMP(out) + phosphate(in) = dAMP(in) + phosphate(out). It catalyses the reaction 3'-AMP(out) + phosphate(in) = 3'-AMP(in) + phosphate(out). It carries out the reaction dADP(out) + phosphate(in) + H(+)(out) = dADP(in) + phosphate(out) + H(+)(in). With respect to regulation, activated by an increase in cytosolic calcium levels that induce a conformational change of the N-terminal regulatory domain, uncapping the channel and allowing transport. Inhibited by bathophenanthroline, mersalyl, p-hydroxymercuribenzoate, bromcresol purple and tannic acid. In terms of biological role, electroneutral antiporter that mediates the transport of adenyl nucleotides through the inner mitochondrial membrane. Originally identified as an ATP-magnesium/inorganic phosphate antiporter, it also acts as a broad specificity adenyl nucleotide antiporter. By regulating the mitochondrial matrix adenyl nucleotide pool could adapt to changing cellular energetic demands and indirectly regulate adenyl nucleotide-dependent metabolic pathways. In vitro, a low activity is also observed with guanyl and pyrimidine nucleotides. May play a role in protecting cells against oxidative stress-induced cell death, by buffering calcium levels in the mitochondrial matrix through the formation of calcium-phosphate precipitates. This is Mitochondrial adenyl nucleotide antiporter SLC25A24 from Mus musculus (Mouse).